The following is a 155-amino-acid chain: Large ribosomal subunit protein eL24 (155 aa).

The disordered stretch occupies residues 92 to 155 (AKRNMKPEVR…KSAPRVGGKR (64 aa)). A compositionally biased stretch (basic and acidic residues) spans 96-117 (MKPEVRKAQRDQAIKAAKEQKK). Low complexity predominate over residues 124 to 133 (KASAPAPKAK).

The protein belongs to the eukaryotic ribosomal protein eL24 family.

The polypeptide is Large ribosomal subunit protein eL24 (RpL24) (Spodoptera frugiperda (Fall armyworm)).